A 206-amino-acid polypeptide reads, in one-letter code: uncharacterized protein (206 aa).

A MurNAc-LAA domain is found at 32 to 201; sequence VYIDAGHGGE…AADAIVNGID (170 aa).

The protein belongs to the N-acetylmuramoyl-L-alanine amidase 3 family.

This is an uncharacterized protein from Bacillus subtilis (strain 168).